A 352-amino-acid polypeptide reads, in one-letter code: Protein RecA (352 aa).

65-72 provides a ligand contact to ATP; the sequence is GPESSGKT.

The protein belongs to the RecA family.

Its subcellular location is the cytoplasm. In terms of biological role, can catalyze the hydrolysis of ATP in the presence of single-stranded DNA, the ATP-dependent uptake of single-stranded DNA by duplex DNA, and the ATP-dependent hybridization of homologous single-stranded DNAs. It interacts with LexA causing its activation and leading to its autocatalytic cleavage. This is Protein RecA from Pseudomonas fluorescens (strain SBW25).